The sequence spans 88 residues: uncharacterized protein (88 aa).

An N-terminal signal peptide occupies residues 1 to 25; it reads MRAAFWVGCAALLLSACSSEPVQQA.

This is an uncharacterized protein from Escherichia coli O6:H1 (strain CFT073 / ATCC 700928 / UPEC).